The chain runs to 1070 residues: DNA-directed RNA polymerase subunit beta (1070 aa).

Belongs to the RNA polymerase beta chain family. As to quaternary structure, in plastids the minimal PEP RNA polymerase catalytic core is composed of four subunits: alpha, beta, beta', and beta''. When a (nuclear-encoded) sigma factor is associated with the core the holoenzyme is formed, which can initiate transcription.

The protein localises to the plastid. Its subcellular location is the chloroplast. It carries out the reaction RNA(n) + a ribonucleoside 5'-triphosphate = RNA(n+1) + diphosphate. DNA-dependent RNA polymerase catalyzes the transcription of DNA into RNA using the four ribonucleoside triphosphates as substrates. This Nicotiana tomentosiformis (Tobacco) protein is DNA-directed RNA polymerase subunit beta.